The following is a 181-amino-acid chain: MGCCTGRCTLIFICTLQMLVALERQIFDFLGYQWAPILGNFLHIIVVILGLFGTIQYRPRYIVAYTIWTAFWVAWNVFIICFYLEVGGLSKDTDLMTFNISIHRSWWREHGPGCVWRLVPAPPSKNLGDHSFISVTGCIIEFQYIEVIHSAVQILLSLIGFVYACYVISVITDEEDSCRHK.

4 consecutive transmembrane segments (helical) span residues T5–L22, A35–I55, I62–F82, and A151–I171.

This sequence belongs to the NKAIN family. In terms of assembly, interacts with atp1b1 C-terminus.

It localises to the cell membrane. The protein is Sodium/potassium-transporting ATPase subunit beta-1-interacting protein 3 (nkain3) of Xenopus tropicalis (Western clawed frog).